A 608-amino-acid polypeptide reads, in one-letter code: Histone-arginine methyltransferase CARM1 (608 aa).

The interval 28-139 (ATVSVFPGAR…GHTLERSVFS (112 aa)) is interaction with C9orf72. The region spanning 147–454 (AVQYFQFYGY…KRQSYDISIV (308 aa)) is the SAM-dependent MTase PRMT-type domain. Residues Gln-160, Arg-169, Gly-193, and Glu-215 each coordinate S-adenosyl-L-methionine. Residue Ser-217 is modified to Phosphoserine. Lys-228 is covalently cross-linked (Glycyl lysine isopeptide (Lys-Gly) (interchain with G-Cter in ubiquitin)). S-adenosyl-L-methionine contacts are provided by Glu-244 and Ser-272. A required for nuclear translocation region spans residues 347–380 (RILMAKSVKYTVNFLEAKEGDLHRIEIPFKFHML). The interval 500–608 (TGSTYNLSSG…IPTNTMHYGS (109 aa)) is transactivation domain. A Dimethylated arginine modification is found at Arg-551.

Belongs to the class I-like SAM-binding methyltransferase superfamily. Protein arginine N-methyltransferase family. Homodimer. Interacts with NR1H4. Interacts with SNRPC. Interacts with the C-terminus of NCOA2/GRIP1, NCO3/ACTR and NCOA1/SRC1. Part of a complex consisting of CARM1, EP300/P300 and NCOA2/GRIP1. Interacts with FLII, TP53, myogenic factor MEF2, EP300/P300, TRIM24, CREBBP and CTNNB1. Interacts with RELA. Identified in a complex containing CARM1, TRIM24 and NCOA2/GRIP1. Interacts with NCOA3/SRC3. Interacts with SKP2. Interacts (via PH domain-like fold) with C9orf72. Interacts with PARP1; promoting PARP1 recruimtent to replication forks. In terms of processing, phosphorylation at Ser-217 is strongly increased during mitosis, and decreases rapidly to a very low, basal level after entry into the G1 phase of the cell cycle. Phosphorylation at Ser-217 interferes with S-adenosyl-L-methionine binding and strongly reduces methyltransferase activity. Phosphorylation at Ser-217 may promote cytosolic location. Auto-methylated on Arg-551. Methylation enhances transcription coactivator activity. Methylation is required for its role in the regulation of pre-mRNA alternative splicing. Post-translationally, ubiquitinated by E3 ubiquitin-protein ligase complex containing FBXO9 at Lys-228; leading to proteasomal degradation. As to expression, ubiquitously expressed. Within the brain, present in proliferating cells from lateral ventricular zone and dentate gyrus (at protein level).

It localises to the nucleus. The protein resides in the cytoplasm. The protein localises to the chromosome. It carries out the reaction L-arginyl-[protein] + 2 S-adenosyl-L-methionine = N(omega),N(omega)-dimethyl-L-arginyl-[protein] + 2 S-adenosyl-L-homocysteine + 2 H(+). With respect to regulation, methylation of H3R17 (H3R17me) by CARM1 is stimulated by preacetylation of H3 'Lys-18' (H3K18ac) H3 'Lys-23' (H3K23ac) by EP300 and blocked by citrullination of H3 'Arg-17' (H3R17ci) by PADI4. Functionally, methylates (mono- and asymmetric dimethylation) the guanidino nitrogens of arginyl residues in several proteins involved in DNA packaging, transcription regulation, pre-mRNA splicing, and mRNA stability. Recruited to promoters upon gene activation together with histone acetyltransferases from EP300/P300 and p160 families, methylates histone H3 at 'Arg-17' (H3R17me), forming mainly asymmetric dimethylarginine (H3R17me2a), leading to activation of transcription via chromatin remodeling. During nuclear hormone receptor activation and TCF7L2/TCF4 activation, acts synergically with EP300/P300 and either one of the p160 histone acetyltransferases NCOA1/SRC1, NCOA2/GRIP1 and NCOA3/ACTR or CTNNB1/beta-catenin to activate transcription. During myogenic transcriptional activation, acts together with NCOA3/ACTR as a coactivator for MEF2C. During monocyte inflammatory stimulation, acts together with EP300/P300 as a coactivator for NF-kappa-B. Acts as a coactivator for PPARG, promotes adipocyte differentiation and the accumulation of brown fat tissue. Plays a role in the regulation of pre-mRNA alternative splicing by methylation of splicing factors. Also seems to be involved in p53/TP53 transcriptional activation. Methylates EP300/P300, both at 'Arg-2142', which may loosen its interaction with NCOA2/GRIP1, and at 'Arg-580' and 'Arg-604' in the KIX domain, which impairs its interaction with CREB and inhibits CREB-dependent transcriptional activation. Also methylates arginine residues in RNA-binding proteins PABPC1, ELAVL1 and ELAV4, which may affect their mRNA-stabilizing properties and the half-life of their target mRNAs. Acts as a transcriptional coactivator of ACACA/acetyl-CoA carboxylase by enriching H3R17 methylation at its promoter, thereby positively regulating fatty acid synthesis. Independently of its methyltransferase activity, involved in replication fork progression: promotes PARP1 recruitment to replication forks, leading to poly-ADP-ribosylation of chromatin at replication forks and reduced fork speed. This chain is Histone-arginine methyltransferase CARM1 (Carm1), found in Mus musculus (Mouse).